The primary structure comprises 561 residues: Lysine--tRNA ligase (561 aa).

Residues Glu-409 and Glu-416 each contribute to the Mg(2+) site.

Belongs to the class-II aminoacyl-tRNA synthetase family. As to quaternary structure, homodimer. Mg(2+) is required as a cofactor.

It localises to the cytoplasm. It carries out the reaction tRNA(Lys) + L-lysine + ATP = L-lysyl-tRNA(Lys) + AMP + diphosphate. This Nostoc punctiforme (strain ATCC 29133 / PCC 73102) protein is Lysine--tRNA ligase.